A 496-amino-acid polypeptide reads, in one-letter code: Probable cytosol aminopeptidase (496 aa).

Residues lysine 262 and aspartate 267 each contribute to the Mn(2+) site. Lysine 274 is a catalytic residue. Positions 285, 344, and 346 each coordinate Mn(2+). Arginine 348 is an active-site residue.

This sequence belongs to the peptidase M17 family. Requires Mn(2+) as cofactor.

The protein resides in the cytoplasm. The catalysed reaction is Release of an N-terminal amino acid, Xaa-|-Yaa-, in which Xaa is preferably Leu, but may be other amino acids including Pro although not Arg or Lys, and Yaa may be Pro. Amino acid amides and methyl esters are also readily hydrolyzed, but rates on arylamides are exceedingly low.. It carries out the reaction Release of an N-terminal amino acid, preferentially leucine, but not glutamic or aspartic acids.. Its function is as follows. Presumably involved in the processing and regular turnover of intracellular proteins. Catalyzes the removal of unsubstituted N-terminal amino acids from various peptides. The protein is Probable cytosol aminopeptidase of Rhizobium leguminosarum bv. trifolii (strain WSM2304).